Consider the following 405-residue polypeptide: Envelope glycoprotein M (405 aa).

The Intravirion portion of the chain corresponds to 1–17 (MKSSKNDTFVYRTWVKT). A helical transmembrane segment spans residues 18–38 (LVVYFVMFVMSAVVPITAMFP). Over 39–76 (NLGYPCYFNALVDYGALNLTNYNLAHHLTPTLYLEPPE) the chain is Virion surface. A helical membrane pass occupies residues 77 to 97 (MFVYITLVFIADCVAFIYYAC). Residues 98-121 (GEVALIKARKKVSGLTDLSAWVSA) are Intravirion-facing. A helical membrane pass occupies residues 122–142 (VGSPTVLFLAILKLWSIQVFI). Residues 143–149 (QVLSYKH) lie on the Virion surface side of the membrane. A helical transmembrane segment spans residues 150 to 170 (VFLSAFVYFLHFLASVLHACA). Over 171 to 192 (CVTRFSPVWVVKAQDNSIPQDT) the chain is Intravirion. The chain crosses the membrane as a helical span at residues 193 to 215 (FLWWVVFYLKPVVTNLYLGCLAL). The Virion surface portion of the chain corresponds to 216 to 245 (ETLVFSLSVFLALGNSFYFMVGDMVLGAVN). A helical membrane pass occupies residues 246 to 266 (LFLILPIFWYILTEVWLASFL). A topological domain (intravirion) is located at residue Arg-267. The helical transmembrane segment at 268-288 (HNFGFYCGMFIASIILILPLV) threads the bilayer. Topologically, residues 289–299 (RYEAVFVSAKL) are virion surface. A helical membrane pass occupies residues 300–320 (HTTVAINVAIIPILCSVAMLI). Residues 321–405 (RICRIFKSMR…TTDSEEEIFP (85 aa)) lie on the Intravirion side of the membrane. A disordered region spans residues 346 to 405 (LESEPRPRPSRTPSPGRNRRRSSTSSSSSRSTRRQRPVSTQALVSSVLPMTTDSEEEIFP). Residues 386–397 (QALVSSVLPMTT) show a composition bias toward polar residues.

The protein belongs to the herpesviridae glycoprotein M family. In terms of assembly, interacts (via N-terminus) with gN (via N-terminus). The gM-gN heterodimer forms the gCII complex.

Its subcellular location is the virion membrane. The protein resides in the host Golgi apparatus. It localises to the host trans-Golgi network. The protein localises to the host endosome membrane. It is found in the host nucleus inner membrane. In terms of biological role, envelope glycoprotein important for virion assembly and egress. Plays a role in the correct incorporation of gH-gL into virion membrane. Directs the glycoprotein N (gN) to the host trans-Golgi network. The polypeptide is Envelope glycoprotein M (Epstein-Barr virus (strain B95-8) (HHV-4)).